Here is a 280-residue protein sequence, read N- to C-terminus: Equatorin (280 aa).

The signal sequence occupies residues 1 to 19 (MDFILLIFLSGVFLPNIFS). Topologically, residues 20 to 183 (LQPTVEQDPG…LSELEEIKLK (164 aa)) are vesicular. The segment at 112–131 (ATASGEEDKRSEPSRKSSTP) is disordered. Basic and acidic residues predominate over residues 117 to 126 (EEDKRSEPSR). Residue N145 is glycosylated (N-linked (GlcNAc...) asparagine). A helical membrane pass occupies residues 184–204 (LMLGISLMTLILLIPLLIFCF). Residues 205–280 (ATLYKLRHLR…AEVTEERISE (76 aa)) lie on the Cytoplasmic side of the membrane. S279 is subject to Phosphoserine.

As to quaternary structure, interacts with SNAP25. Highly N- and O-glycosylated; contains sialic acid. As to expression, highly expressed in testis and epididymis. Low expression in other tissues.

It is found in the cytoplasmic vesicle. The protein resides in the secretory vesicle. Its subcellular location is the acrosome membrane. The protein localises to the acrosome inner membrane. It localises to the acrosome outer membrane. Functionally, acrosomal membrane-anchored protein involved in the process of fertilization and in acrosome biogenesis. This chain is Equatorin (Eqtn), found in Rattus norvegicus (Rat).